The primary structure comprises 444 residues: uncharacterized protein (444 aa).

Residues 1–69 (MEKYMSLLTR…PKSGYYIVKK (69 aa)) enclose the HTH gntR-type domain. Residues 29–48 (IRQLSARYQVSKSTVIRALQ) constitute a DNA-binding region (H-T-H motif). The residue at position 286 (lysine 286) is an N6-(pyridoxal phosphate)lysine.

It in the C-terminal section; belongs to the class-I pyridoxal-phosphate-dependent aminotransferase family. Pyridoxal 5'-phosphate is required as a cofactor.

This is an uncharacterized protein from Bacillus subtilis (strain 168).